The sequence spans 512 residues: Intermediate filament family orphan 2 (512 aa).

The IF rod domain occupies 50–479 (NIHLLKGLNV…RLIKGSADRN (430 aa)). A disordered region spans residues 473–512 (KGSADRNSPSPSSVASSDSGSTDEIQEDLEREADVEPMVS). A compositionally biased stretch (low complexity) spans 480-492 (SPSPSSVASSDSG). Over residues 496 to 512 (EIQEDLEREADVEPMVS) the composition is skewed to acidic residues.

This sequence belongs to the intermediate filament family.

The chain is Intermediate filament family orphan 2 (Iffo2) from Mus musculus (Mouse).